A 276-amino-acid chain; its full sequence is 2-dehydro-3-deoxyphosphooctonate aldolase (276 aa).

It belongs to the KdsA family.

Its subcellular location is the cytoplasm. It carries out the reaction D-arabinose 5-phosphate + phosphoenolpyruvate + H2O = 3-deoxy-alpha-D-manno-2-octulosonate-8-phosphate + phosphate. The protein operates within carbohydrate biosynthesis; 3-deoxy-D-manno-octulosonate biosynthesis; 3-deoxy-D-manno-octulosonate from D-ribulose 5-phosphate: step 2/3. It participates in bacterial outer membrane biogenesis; lipopolysaccharide biosynthesis. The sequence is that of 2-dehydro-3-deoxyphosphooctonate aldolase from Xanthomonas euvesicatoria pv. vesicatoria (strain 85-10) (Xanthomonas campestris pv. vesicatoria).